A 400-amino-acid polypeptide reads, in one-letter code: ELAV-like protein 4 (400 aa).

A disordered region spans residues 12-48 (TMEPQVSNGPTSNTSNGPSSNSRNCPSPMQTGAATDD). Over residues 18 to 33 (SNGPTSNTSNGPSSNS) the composition is skewed to low complexity. Over residues 34–44 (RNCPSPMQTGA) the composition is skewed to polar residues. 3 consecutive RRM domains span residues 51-158 (TNLI…YARP), 166-246 (ANLY…FANN), and 317-395 (WCIF…FKTN).

The protein belongs to the RRM elav family.

The protein resides in the cytoplasm. It is found in the perikaryon. It localises to the cell projection. The protein localises to the axon. Its subcellular location is the dendrite. The protein resides in the growth cone. Functionally, RNA-binding protein that is involved in the post-transcriptional regulation of mRNAs. Plays a role in the regulation of mRNA stability, alternative splicing and translation. Binds to AU-rich element (ARE) sequences in the 3' untranslated region (3'UTR) of target mRNAs. Mainly plays a role in neuron-specific RNA processing. In Xenopus tropicalis (Western clawed frog), this protein is ELAV-like protein 4 (elavl4).